Consider the following 453-residue polypeptide: Pup--protein ligase (453 aa).

Position 9 (Glu-9) interacts with Mg(2+). Arg-53 provides a ligand contact to ATP. Tyr-55 is a binding site for Mg(2+). Asp-57 functions as the Proton acceptor in the catalytic mechanism. Glu-63 is a binding site for Mg(2+). ATP is bound by residues Thr-66 and Trp-420.

It belongs to the Pup ligase/Pup deamidase family. Pup-conjugating enzyme subfamily.

The enzyme catalyses ATP + [prokaryotic ubiquitin-like protein]-L-glutamate + [protein]-L-lysine = ADP + phosphate + N(6)-([prokaryotic ubiquitin-like protein]-gamma-L-glutamyl)-[protein]-L-lysine.. Its pathway is protein degradation; proteasomal Pup-dependent pathway. It functions in the pathway protein modification; protein pupylation. Catalyzes the covalent attachment of the prokaryotic ubiquitin-like protein modifier Pup to the proteasomal substrate proteins, thereby targeting them for proteasomal degradation. This tagging system is termed pupylation. The ligation reaction involves the side-chain carboxylate of the C-terminal glutamate of Pup and the side-chain amino group of a substrate lysine. In Streptomyces griseus subsp. griseus (strain JCM 4626 / CBS 651.72 / NBRC 13350 / KCC S-0626 / ISP 5235), this protein is Pup--protein ligase.